The primary structure comprises 191 residues: Putative resolvase L103 (191 aa).

Residues 11-30 (LEVLKVHYQTLYRMEEKGLI) constitute a DNA-binding region (H-T-H motif). In terms of domain architecture, Resolvase/invertase-type recombinase catalytic spans 59 to 191 (KGICYCRVSS…KKSGKLKAKK (133 aa)). Residues 65-91 (RVSSKKQIKDLNRQVEYMEKNYPEYEI) are a coiled coil. Ser-67 acts as the O-(5'-phospho-DNA)-serine intermediate in catalysis.

This sequence belongs to the site-specific recombinase resolvase family.

In terms of biological role, resolvase catalyzes the resolution (a site-specific recombination) of the cointegrated replicon to yield the final transposition products. The polypeptide is Putative resolvase L103 (Acanthamoeba polyphaga (Amoeba)).